A 1274-amino-acid chain; its full sequence is Regulator of telomere elongation helicase 1 (1274 aa).

The region spanning 7 to 296 is the Helicase ATP-binding domain; the sequence is NGVTVDFPFQ…ARVAQHGELQ (290 aa). Position 42–49 (42–49) interacts with ATP; sequence SPTGTGKT. [4Fe-4S] cluster is bound by residues Cys-145, Cys-163, Cys-172, and Cys-207. Residues 151 to 167 carry the Nuclear localization signal motif; sequence KKQESNHMQISLCRKKV. The DEAH box motif lies at 250–253; that stretch reads DEAH. Positions 871-877 match the Nuclear localization signal motif; the sequence is QRGGKKK. 3 disordered regions span residues 982–1002, 1014–1038, and 1143–1198; these read NSLP…RREL, RQLD…SKGD, and ELPC…DDTI. Positions 1186 to 1196 are enriched in basic and acidic residues; that stretch reads QRPDQSARSDD.

This sequence belongs to the helicase family. RAD3/XPD subfamily. Interacts with TERF1. Interacts (via PIP-box) with PCNA; the interaction is direct and essential for suppressing telomere fragility. Interacts with MMS19; the interaction mediates the association of RTEL1 with the cytosolic iron-sulfur protein assembly (CIA) complex.

The protein localises to the nucleus. It catalyses the reaction ATP + H2O = ADP + phosphate + H(+). Its function is as follows. A probable ATP-dependent DNA helicase implicated in telomere-length regulation, DNA repair and the maintenance of genomic stability. Acts as an anti-recombinase to counteract toxic recombination and limit crossover during meiosis. Regulates meiotic recombination and crossover homeostasis by physically dissociating strand invasion events and thereby promotes noncrossover repair by meiotic synthesis dependent strand annealing (SDSA) as well as disassembly of D loop recombination intermediates. Also disassembles T loops and prevents telomere fragility by counteracting telomeric G4-DNA structures, which together ensure the dynamics and stability of the telomere. This Rattus norvegicus (Rat) protein is Regulator of telomere elongation helicase 1 (Rtel1).